The primary structure comprises 360 residues: Phospho-N-acetylmuramoyl-pentapeptide-transferase (360 aa).

The Periplasmic portion of the chain corresponds to 1–25; that stretch reads MLVWLAEHLVKYYSGFNVFSYLTFR. A helical membrane pass occupies residues 26 to 46; that stretch reads AIVSLLTALFISLWMGPRMIA. At 47–71 the chain is on the cytoplasmic side; that stretch reads RLQKLSFGQVVRNDGPESHFSKRGT. The chain crosses the membrane as a helical span at residues 72 to 92; sequence PTMGGIMILTAIVISVLLWAY. Position 93 (Pro-93) is a topological domain, periplasmic. A helical membrane pass occupies residues 94–114; that stretch reads SNPYVWCVLVVLIGYGIIGFV. Over 115-131 the chain is Cytoplasmic; it reads DDYHKVVRKDTKGLIAR. Residues 132–152 traverse the membrane as a helical segment; the sequence is WKYFWMSVIALGVAFALYLVG. The Periplasmic portion of the chain corresponds to 153-167; the sequence is KDTPATQLVVPFFKD. The helical transmembrane segment at 168–188 threads the bilayer; the sequence is VMPQLGLFYILLSYFVIVGTG. Residues 189–198 lie on the Cytoplasmic side of the membrane; it reads NAVNLTDGLD. The helical transmembrane segment at 199-219 threads the bilayer; sequence GLAIMPTVFVAAGFALVAWAT. The Periplasmic portion of the chain corresponds to 220-235; sequence GNMNFANYLHIPYLRY. Residues 236 to 256 traverse the membrane as a helical segment; that stretch reads AGELVIVCTAIVGAGLGFLWF. Over 257-262 the chain is Cytoplasmic; the sequence is NTYPAQ. Residues 263–283 form a helical membrane-spanning segment; sequence VFMGDVGSLALGGALGIIAVL. Residues 284–287 lie on the Periplasmic side of the membrane; it reads LRQE. The helical transmembrane segment at 288–308 threads the bilayer; sequence FLLVIMGGVFVVETLSVILQV. The Cytoplasmic segment spans residues 309–337; it reads GSFKLRGQRIFRMAPIHHHYELKGWPEPR. A helical membrane pass occupies residues 338-358; it reads VIVRFWIISLMLVLIGLATLK. Over 359-360 the chain is Periplasmic; the sequence is VR.

It belongs to the glycosyltransferase 4 family. MraY subfamily. Mg(2+) is required as a cofactor.

It localises to the cell inner membrane. It catalyses the reaction UDP-N-acetyl-alpha-D-muramoyl-L-alanyl-gamma-D-glutamyl-meso-2,6-diaminopimeloyl-D-alanyl-D-alanine + di-trans,octa-cis-undecaprenyl phosphate = di-trans,octa-cis-undecaprenyl diphospho-N-acetyl-alpha-D-muramoyl-L-alanyl-D-glutamyl-meso-2,6-diaminopimeloyl-D-alanyl-D-alanine + UMP. It functions in the pathway cell wall biogenesis; peptidoglycan biosynthesis. Its function is as follows. Catalyzes the initial step of the lipid cycle reactions in the biosynthesis of the cell wall peptidoglycan: transfers peptidoglycan precursor phospho-MurNAc-pentapeptide from UDP-MurNAc-pentapeptide onto the lipid carrier undecaprenyl phosphate, yielding undecaprenyl-pyrophosphoryl-MurNAc-pentapeptide, known as lipid I. The polypeptide is Phospho-N-acetylmuramoyl-pentapeptide-transferase (Salmonella paratyphi A (strain ATCC 9150 / SARB42)).